The chain runs to 141 residues: Nucleoside diphosphate kinase (141 aa).

ATP contacts are provided by lysine 11, phenylalanine 59, arginine 87, threonine 93, arginine 104, and asparagine 114. Histidine 117 functions as the Pros-phosphohistidine intermediate in the catalytic mechanism.

The protein belongs to the NDK family. As to quaternary structure, homotetramer. Mg(2+) serves as cofactor.

The protein localises to the cytoplasm. It catalyses the reaction a 2'-deoxyribonucleoside 5'-diphosphate + ATP = a 2'-deoxyribonucleoside 5'-triphosphate + ADP. The catalysed reaction is a ribonucleoside 5'-diphosphate + ATP = a ribonucleoside 5'-triphosphate + ADP. Its function is as follows. Major role in the synthesis of nucleoside triphosphates other than ATP. The ATP gamma phosphate is transferred to the NDP beta phosphate via a ping-pong mechanism, using a phosphorylated active-site intermediate. This is Nucleoside diphosphate kinase from Legionella pneumophila (strain Lens).